Consider the following 339-residue polypeptide: 5-dehydro-2-deoxygluconokinase (339 aa).

It belongs to the carbohydrate kinase PfkB family.

It carries out the reaction 5-dehydro-2-deoxy-D-gluconate + ATP = 6-phospho-5-dehydro-2-deoxy-D-gluconate + ADP + H(+). It participates in polyol metabolism; myo-inositol degradation into acetyl-CoA; acetyl-CoA from myo-inositol: step 5/7. Catalyzes the phosphorylation of 5-dehydro-2-deoxy-D-gluconate (2-deoxy-5-keto-D-gluconate or DKG) to 6-phospho-5-dehydro-2-deoxy-D-gluconate (DKGP). In Clostridium beijerinckii (strain ATCC 51743 / NCIMB 8052) (Clostridium acetobutylicum), this protein is 5-dehydro-2-deoxygluconokinase.